Reading from the N-terminus, the 237-residue chain is Putative N-acetylmannosamine-6-phosphate 2-epimerase (237 aa).

The protein belongs to the NanE family.

The catalysed reaction is an N-acyl-D-glucosamine 6-phosphate = an N-acyl-D-mannosamine 6-phosphate. The protein operates within amino-sugar metabolism; N-acetylneuraminate degradation; D-fructose 6-phosphate from N-acetylneuraminate: step 3/5. Its function is as follows. Converts N-acetylmannosamine-6-phosphate (ManNAc-6-P) to N-acetylglucosamine-6-phosphate (GlcNAc-6-P). The protein is Putative N-acetylmannosamine-6-phosphate 2-epimerase of Caldanaerobacter subterraneus subsp. tengcongensis (strain DSM 15242 / JCM 11007 / NBRC 100824 / MB4) (Thermoanaerobacter tengcongensis).